Here is a 629-residue protein sequence, read N- to C-terminus: tRNA uridine 5-carboxymethylaminomethyl modification enzyme MnmG (629 aa).

FAD-binding positions include 13-18 (GGGHAG), Val-125, and Ser-180. 273–287 (GPRYCPSIEDKVMRF) is a binding site for NAD(+). Gln-370 contributes to the FAD binding site.

Belongs to the MnmG family. Homodimer. Heterotetramer of two MnmE and two MnmG subunits. The cofactor is FAD.

The protein resides in the cytoplasm. NAD-binding protein involved in the addition of a carboxymethylaminomethyl (cmnm) group at the wobble position (U34) of certain tRNAs, forming tRNA-cmnm(5)s(2)U34. This is tRNA uridine 5-carboxymethylaminomethyl modification enzyme MnmG from Escherichia coli (strain SMS-3-5 / SECEC).